We begin with the raw amino-acid sequence, 422 residues long: PHAF1 protein T01G9.2 (422 aa).

This sequence belongs to the PHAF1 family.

The protein localises to the cytoplasm. The protein resides in the preautophagosomal structure. In terms of biological role, may play a regulatory role in autophagic activity. This is PHAF1 protein T01G9.2 from Caenorhabditis elegans.